Here is a 48-residue protein sequence, read N- to C-terminus: M-oxotoxin-Ot1c (48 aa).

The protein resides in the secreted. Its subcellular location is the target cell membrane. Functionally, disrupts cell membranes, particularly those rich in phosphocholine, through formation of pores. Has antimicrobial activity, hemolytic activity and insecticidal activity. The sequence is that of M-oxotoxin-Ot1c from Oxyopes takobius (Lynx spider).